A 115-amino-acid polypeptide reads, in one-letter code: U3-lycotoxin-Ls1g (115 aa).

Residues 1-20 (MKFVLLFGVFLVTLFSYSSA) form the signal peptide. Positions 21-44 (EMLDDFDQADEDELLSLIEKEEAR) are excised as a propeptide. Intrachain disulfides connect cysteine 48/cysteine 63, cysteine 55/cysteine 72, cysteine 62/cysteine 87, and cysteine 74/cysteine 85.

It belongs to the neurotoxin 19 (CSTX) family. 01 subfamily. Expressed by the venom gland.

The protein resides in the secreted. This chain is U3-lycotoxin-Ls1g, found in Lycosa singoriensis (Wolf spider).